A 113-amino-acid polypeptide reads, in one-letter code: Large ribosomal subunit protein uL22 (113 aa).

The protein belongs to the universal ribosomal protein uL22 family. Part of the 50S ribosomal subunit.

In terms of biological role, this protein binds specifically to 23S rRNA; its binding is stimulated by other ribosomal proteins, e.g. L4, L17, and L20. It is important during the early stages of 50S assembly. It makes multiple contacts with different domains of the 23S rRNA in the assembled 50S subunit and ribosome. Its function is as follows. The globular domain of the protein is located near the polypeptide exit tunnel on the outside of the subunit, while an extended beta-hairpin is found that lines the wall of the exit tunnel in the center of the 70S ribosome. This chain is Large ribosomal subunit protein uL22, found in Xanthomonas axonopodis pv. citri (strain 306).